Consider the following 31-residue polypeptide: Potassium channel toxin alpha-KTx 19.2 (31 aa).

Disulfide bonds link cysteine 3-cysteine 22, cysteine 8-cysteine 27, and cysteine 12-cysteine 29.

This sequence belongs to the short scorpion toxin superfamily. Potassium channel inhibitor family. Alpha-KTx 19 subfamily. As to quaternary structure, monomer. Expressed by the venom gland.

Its subcellular location is the secreted. Functionally, blocks voltage-gated potassium channels rKv1.1/KCNA1, rKv1.2/KCNA2, hKv1.3/KCNA3, rKv1.6/KCNA6 (IC(50)=75.9 nM) and, to a lesser extent, Shaker IR (with the inactivation domain removed). The chain is Potassium channel toxin alpha-KTx 19.2 from Buthus occitanus tunetanus (Common European scorpion).